Consider the following 126-residue polypeptide: Small ribosomal subunit protein uS11 (126 aa).

It belongs to the universal ribosomal protein uS11 family. Part of the 30S ribosomal subunit. Interacts with proteins S7 and S18. Binds to IF-3.

Its function is as follows. Located on the platform of the 30S subunit, it bridges several disparate RNA helices of the 16S rRNA. Forms part of the Shine-Dalgarno cleft in the 70S ribosome. The sequence is that of Small ribosomal subunit protein uS11 from Orientia tsutsugamushi (strain Boryong) (Rickettsia tsutsugamushi).